Consider the following 159-residue polypeptide: UPF0262 protein RD1_1069 (159 aa).

This sequence belongs to the UPF0262 family.

This chain is UPF0262 protein RD1_1069, found in Roseobacter denitrificans (strain ATCC 33942 / OCh 114) (Erythrobacter sp. (strain OCh 114)).